Reading from the N-terminus, the 167-residue chain is MNAVFPGSFDPVTSGHMDVLTRASHMFEQVTVTVMHNARKQGRHLFTLDERLEILREATAGLPNVRVDSFSGLLVDYVAQQGRSVIVRGLRAVSDYEYELQIAHLNRQIGEVETVFIMAATHWSFVSSSMVKEIASYGGKIHEMVPPASEAALRRKFAEVYDKRDDA.

A substrate-binding site is contributed by S8. ATP contacts are provided by residues 8–9 (SF) and H16. Substrate is bound by residues K40, L74, and R88. ATP is bound by residues 89 to 91 (GLR), E99, and 123 to 129 (WSFVSSS).

The protein belongs to the bacterial CoaD family. As to quaternary structure, homohexamer. Mg(2+) serves as cofactor.

It localises to the cytoplasm. The catalysed reaction is (R)-4'-phosphopantetheine + ATP + H(+) = 3'-dephospho-CoA + diphosphate. Its pathway is cofactor biosynthesis; coenzyme A biosynthesis; CoA from (R)-pantothenate: step 4/5. Its function is as follows. Reversibly transfers an adenylyl group from ATP to 4'-phosphopantetheine, yielding dephospho-CoA (dPCoA) and pyrophosphate. This chain is Phosphopantetheine adenylyltransferase, found in Deinococcus radiodurans (strain ATCC 13939 / DSM 20539 / JCM 16871 / CCUG 27074 / LMG 4051 / NBRC 15346 / NCIMB 9279 / VKM B-1422 / R1).